Here is a 1373-residue protein sequence, read N- to C-terminus: Ribonuclease 3 (1373 aa).

3 disordered regions span residues 1-99 (MQGN…PVRP), 119-406 (MPPP…EEEL), and 447-496 (FEEE…SSSS). Residues 47–69 (PAQYQYEPPSAPSSSYSNSQAPS) are compositionally biased toward low complexity. 3 stretches are compositionally biased toward pro residues: residues 70-99 (FMPPRPDFVPYPPPAAPSAQGPLPPCPVRP), 119-133 (MPPPMPCPNNPPASG), and 144-159 (MVPPPSMPHPPPPPVM). Low complexity-rich tracts occupy residues 160–169 (PQQVNYQYPP) and 185–200 (NNSSSFPPSANSSSTP). Composition is skewed to basic and acidic residues over residues 214–271 (QNER…DRGR), 278–288 (RSYERSRERDR), and 297–312 (RRSPSLERSYKKEYKR). Ser-354 and Ser-372 each carry phosphoserine. 2 stretches are compositionally biased toward basic and acidic residues: residues 363–398 (RWEEEKDRWSDSQGSGKEKNYTSIKEKEAEEVPPEK) and 447–459 (FEEELGNRQEKAK). The tract at residues 389-1364 (KEAEEVPPEK…RWEREHQERE (976 aa)) is necessary for interaction with DGCR8 and pri-miRNA processing activity. Residues 474–490 (EDLESSSESECETDDDS) show a composition bias toward acidic residues. Zn(2+) contacts are provided by Cys-535, Cys-537, His-548, Cys-560, His-608, Cys-675, and His-679. RNase III domains lie at 875 to 1055 (LMHL…LEGS) and 1106 to 1232 (LTEF…IDKD). Glu-968 lines the Mg(2+) pocket. His-1025 contacts Zn(2+). Residues Asn-1041, Glu-1044, Glu-1146, Asp-1218, and Glu-1221 each coordinate Mg(2+). A DRBM domain is found at 1259–1333 (DPKSQLQQCC…AMDALEKYNF (75 aa)).

The protein belongs to the ribonuclease III family. In terms of assembly, component of the microprocessor complex, or pri-miRNA processing protein complex, which is composed of DROSHA and DGCR8. The microprocessor complex is a heterotrimer; each of the two DROSHA RNase III domains binds one DGCR8 (via C-terminal region). Interacts with SP1 and SNIP1. Interacts with SRRT/ARS2. Interacts with CPSF3 and ISY1; this interaction is in an RNA dependent manner. Interacts with PUS10; interaction promotes pri-miRNAs processing. It depends on Mg(2+) as a cofactor. Mn(2+) is required as a cofactor. Degraded by autophagy in response to neuronal activity in motor neurons. In terms of tissue distribution, expressed in motor neurons (at protein level).

The protein resides in the nucleus. It localises to the nucleolus. Its subcellular location is the cytoplasm. It carries out the reaction Endonucleolytic cleavage to 5'-phosphomonoester.. In terms of biological role, ribonuclease III double-stranded (ds) RNA-specific endoribonuclease that is involved in the initial step of microRNA (miRNA) biogenesis. Component of the microprocessor complex that is required to process primary miRNA transcripts (pri-miRNAs) to release precursor miRNA (pre-miRNA) in the nucleus. Within the microprocessor complex, DROSHA cleaves the 3' and 5' strands of a stem-loop in pri-miRNAs (processing center 11 bp from the dsRNA-ssRNA junction) to release hairpin-shaped pre-miRNAs that are subsequently cut by the cytoplasmic DICER to generate mature miRNAs. Involved also in pre-rRNA processing. Cleaves double-strand RNA and does not cleave single-strand RNA. Involved in the formation of GW bodies. Plays a role in growth homeostasis in response to autophagy in motor neurons. This chain is Ribonuclease 3 (Drosha), found in Mus musculus (Mouse).